Reading from the N-terminus, the 124-residue chain is Large ribosomal subunit protein bL21 (124 aa).

The segment at 105–124 (TVKAEPKSKRAPAPEAAADA) is disordered. Over residues 115–124 (APAPEAAADA) the composition is skewed to low complexity.

This sequence belongs to the bacterial ribosomal protein bL21 family. In terms of assembly, part of the 50S ribosomal subunit. Contacts protein L20.

In terms of biological role, this protein binds to 23S rRNA in the presence of protein L20. This Xanthobacter autotrophicus (strain ATCC BAA-1158 / Py2) protein is Large ribosomal subunit protein bL21.